A 302-amino-acid polypeptide reads, in one-letter code: Phosphoribosylaminoimidazole-succinocarboxamide synthase (302 aa).

Belongs to the SAICAR synthetase family.

It catalyses the reaction 5-amino-1-(5-phospho-D-ribosyl)imidazole-4-carboxylate + L-aspartate + ATP = (2S)-2-[5-amino-1-(5-phospho-beta-D-ribosyl)imidazole-4-carboxamido]succinate + ADP + phosphate + 2 H(+). It functions in the pathway purine metabolism; IMP biosynthesis via de novo pathway; 5-amino-1-(5-phospho-D-ribosyl)imidazole-4-carboxamide from 5-amino-1-(5-phospho-D-ribosyl)imidazole-4-carboxylate: step 1/2. The chain is Phosphoribosylaminoimidazole-succinocarboxamide synthase from Polaromonas sp. (strain JS666 / ATCC BAA-500).